Here is a 60-residue protein sequence, read N- to C-terminus: Cytotoxin 1 (60 aa).

Cystine bridges form between cysteine 3/cysteine 21, cysteine 14/cysteine 38, cysteine 42/cysteine 53, and cysteine 54/cysteine 59.

The protein belongs to the three-finger toxin family. Short-chain subfamily. Type IA cytotoxin sub-subfamily. In terms of assembly, monomer in solution; Homodimer and oligomer in the presence of negatively charged lipids forming a pore with a size ranging between 20 and 30 Angstroms. In terms of tissue distribution, expressed by the venom gland.

The protein resides in the secreted. Its subcellular location is the target cell membrane. In terms of biological role, shows cytolytic activity on many different cells by forming pore in lipid membranes. In vivo, increases heart rate or kills the animal by cardiac arrest. In addition, it binds to heparin with high affinity, interacts with Kv channel-interacting protein 1 (KCNIP1) in a calcium-independent manner, and binds to integrin alpha-V/beta-3 (ITGAV/ITGB3) with moderate affinity. The sequence is that of Cytotoxin 1 from Naja mossambica (Mozambique spitting cobra).